Consider the following 592-residue polypeptide: 2-succinyl-5-enolpyruvyl-6-hydroxy-3-cyclohexene-1-carboxylate synthase (592 aa).

This sequence belongs to the TPP enzyme family. MenD subfamily. In terms of assembly, homodimer. The cofactor is Mg(2+). It depends on Mn(2+) as a cofactor. Requires thiamine diphosphate as cofactor.

It carries out the reaction isochorismate + 2-oxoglutarate + H(+) = 5-enolpyruvoyl-6-hydroxy-2-succinyl-cyclohex-3-ene-1-carboxylate + CO2. Its pathway is quinol/quinone metabolism; 1,4-dihydroxy-2-naphthoate biosynthesis; 1,4-dihydroxy-2-naphthoate from chorismate: step 2/7. It participates in quinol/quinone metabolism; menaquinone biosynthesis. Its function is as follows. Catalyzes the thiamine diphosphate-dependent decarboxylation of 2-oxoglutarate and the subsequent addition of the resulting succinic semialdehyde-thiamine pyrophosphate anion to isochorismate to yield 2-succinyl-5-enolpyruvyl-6-hydroxy-3-cyclohexene-1-carboxylate (SEPHCHC). This Haloarcula marismortui (strain ATCC 43049 / DSM 3752 / JCM 8966 / VKM B-1809) (Halobacterium marismortui) protein is 2-succinyl-5-enolpyruvyl-6-hydroxy-3-cyclohexene-1-carboxylate synthase.